The following is a 911-amino-acid chain: Alpha-actinin-4 (911 aa).

An actin-binding region spans residues 1–269; the sequence is MVDYHAANQA…YVSSFYHAFS (269 aa). The segment at 12–26 is interaction with VCL; sequence QYGPSSGGNGTGGGG. The disordered stretch occupies residues 12 to 31; the sequence is QYGPSSGGNGTGGGGGMGDY. A compositionally biased stretch (gly residues) spans 16–29; that stretch reads SSGGNGTGGGGGMG. Phosphotyrosine is present on Tyr31. The segment at 40 to 61 is interaction with VCL; it reads RDLLLDPAWEKQQRKTFTAWCN. Calponin-homology (CH) domains are found at residues 50–154 and 163–269; these read KQQR…LRFA and TSAK…HAFS. The LXXLL motif motif lies at 84 to 88; it reads LMLLL. Residues 108–126 form an interaction with VCL region; the sequence is KINNVNKALDFIASKGVKL. Lys114 carries the N6-acetyllysine modification. Residues 177 to 192 are polyphosphoinositide (PIP2)-binding; it reads TAPYKNVNVQNFHISW. The residue at position 214 (Lys214) is an N6-acetyllysine. Thr249 is modified (phosphothreonine). 4 Spectrin repeats span residues 293–403, 413–518, 528–639, and 649–752; these read HLME…WLLN, HLAE…ALEK, QLHL…ALLE, and HLRR…EVEN. Residues Lys592 and Lys625 each carry the N6-acetyllysine modification. Position 696 is a phosphoserine (Ser696). The tract at residues 736–911 is mediates interaction with MICALL2; the sequence is WEQLLTTIAR…STALYGESDL (176 aa). 2 consecutive EF-hand domains span residues 765–800 and 806–841; these read EQMQ…LGYD and QGDA…ETTD. Asp778 contributes to the Ca(2+) binding site. Lys779 is subject to N6-acetyllysine. Asp780 and Glu789 together coordinate Ca(2+). Lys859 carries the N6-acetyllysine modification. The residue at position 909 (Ser909) is a Phosphoserine.

This sequence belongs to the alpha-actinin family. As to quaternary structure, homodimer; antiparallel. Interacts with MAGI1. Interacts with MICALL2 (preferentially in opened conformation); stimulated by RAB13 activation. Identified in a IGF2BP1-dependent mRNP granule complex containing untranslated mRNAs. Component of the CART complex, at least composed of ACTN4, HGS/HRS, MYO5B and TRIM3. Binds TRIM3 at the N-terminus. Interacts with PDLIM2. Identified in a complex with CASK, IQGAP1, MAGI2, NPHS1, SPTAN1 and SPTBN1. Interacts with PPARG and RARA. Binds to VCL; this interaction triggers VCL conformational changes. Interacts with SEPTIN14. Interacts with IGSF8. As to expression, expressed in the foot process layer of podocytes in the kidney glomerulus but not in tubules (at protein level).

Its subcellular location is the nucleus. The protein resides in the cytoplasm. It localises to the cell junction. It is found in the cytoskeleton. The protein localises to the stress fiber. Its subcellular location is the perinuclear region. In terms of biological role, F-actin cross-linking protein which is thought to anchor actin to a variety of intracellular structures. This is a bundling protein. Probably involved in vesicular trafficking via its association with the CART complex. The CART complex is necessary for efficient transferrin receptor recycling but not for EGFR degradation. Involved in tight junction assembly in epithelial cells probably through interaction with MICALL2. Links MICALL2 to the actin cytoskeleton and recruits it to the tight junctions. May also function as a transcriptional coactivator, stimulating transcription mediated by the nuclear hormone receptors PPARG and RARA. Association with IGSF8 regulates the immune synapse formation and is required for efficient T-cell activation. The polypeptide is Alpha-actinin-4 (Rattus norvegicus (Rat)).